The primary structure comprises 275 residues: 3-oxo-isoapionate decarboxylase (275 aa).

The enzyme catalyses 3-oxoisoapionate + H(+) = L-erythrulose + CO2. The protein operates within carbohydrate metabolism. Its function is as follows. Involved in catabolism of D-apiose. Catalyzes decarboxylation of 3-oxo-isoapionate to L-erythrulose. In Pectobacterium atrosepticum (strain SCRI 1043 / ATCC BAA-672) (Erwinia carotovora subsp. atroseptica), this protein is 3-oxo-isoapionate decarboxylase.